A 980-amino-acid chain; its full sequence is MSSGCRSVGGSTWGNWRGDGGDLRQRRVLSPVCSAPAAGSWIGSQLGNVGNLLATPHPLGKPASSRVGTIVLACLLLFGSCVVRAVPTTPSPPTSTPTSMSTHSHGTVDPTLLPTETPDPLRLAVRESGILAEDGDFYTCPPPTGSTVVRIEPPRTCPKFDLGRNFTEGIAVIFKENIAPYKFRANVYYKDIVVTRVWKGYSHTSLSDRYNDRVPVSVEEIFGLIDSKGKCSSKAEYLRDNIMHHAYHDDEDEVELDLCRPSLQLRGARAWQTTNDTTSYVGWMPWRHYTSTSVNCIVEEVEARSVYPYDSFALSTGDIVYASPFYGLRAAARIEHNSYAQERFRQVEGYRPRDLDSKLQAEEPVTKNFITTPHVTVSWNWTEKKVEACTLTKWKEVDELVRDEFRGSYRFTIRSISSTFISNTTQFKLESAPLTECVSKEAKEAIDSIYKKQYESTHVFSGDVEYYLARGGFLIAFRPMLSNELARLYLNELVRSNRTYDLKNLLNPNANNNNNTTRRRRSLLSVPEPQPTQDGVHREQILHRLHKRAVEATAGTDSSNVTAKQLELIKTTSSIEFAMLQFAYDHIQSHVNEMLSRIATAWCTLQNKERTLWNEMVKINPSAIVSATLDERVAARVLGDVIAITHCAKIEGNVYLQNSMRSMDSNTCYSRPPVTFTITKNANNRGSIEGQLGEENEIFTERKLIEPCALNQKRYFKFGKEYVYYENYTFVRKVPPTEIEVISTYVELNLTLLEDREFLPLEVYTRAELEDTGLLDYSEIQRRNQLHALRFYDIDSVVNVDNTAVIMQGIASFFKGLGKVGEAVGTLVLGAAGAVVSTVSGIASFLNNPFGGLAIGLLVIAGLVAAFFAYRYVMQIRSNPMKALYPITTKALKNKAKTSYGQNEEDDGSDFDEAKLEEAREMIKYMSMVSALEKQEKKAIKKNSGVGLIASNVSKLALRRRGPKYTRLQQNDTMENEKMV.

Residues 1–14 are compositionally biased toward polar residues; it reads MSSGCRSVGGSTWG. 2 disordered regions span residues 1 to 20 and 88 to 118; these read MSSG…RGDG and TTPS…TETP. Positions 1 to 86 are cleaved as a signal peptide; that stretch reads MSSGCRSVGG…LFGSCVVRAV (86 aa). The Virion surface portion of the chain corresponds to 87–849; that stretch reads PTTPSPPTST…SGIASFLNNP (763 aa). Residues 96-118 show a composition bias toward low complexity; it reads TPTSMSTHSHGTVDPTLLPTETP. 5 cysteine pairs are disulfide-bonded: C140–C647, C157–C603, C231–C296, C389–C437, and C668–C708. N165 carries N-linked (GlcNAc...) asparagine; by host glycosylation. The involved in fusion and/or binding to host membrane stretch occupies residues 197–203; that stretch reads VWKGYSH. A glycan (N-linked (GlcNAc...) asparagine; by host) is linked at N275. The tract at residues 282 to 290 is involved in fusion and/or binding to host membrane; the sequence is GWMPWRHYT. N-linked (GlcNAc...) asparagine; by host glycans are attached at residues N380, N423, N497, N514, N515, and N560. The segment covering 505 to 516 has biased composition (low complexity); sequence LLNPNANNNNNT. The disordered stretch occupies residues 505 to 535; sequence LLNPNANNNNNTTRRRRSLLSVPEPQPTQDG. N727 and N749 each carry an N-linked (GlcNAc...) asparagine; by host glycan. 2 hydrophobic membrane proximal region regions span residues 794 to 847 and 823 to 843; these read IDSV…SFLN and AVGT…SGIA. Residues 850-870 traverse the membrane as a helical segment; the sequence is FGGLAIGLLVIAGLVAAFFAY. At 871–980 the chain is on the intravirion side; it reads RYVMQIRSNP…NDTMENEKMV (110 aa). The Golgi targeting motif lies at 925 to 928; sequence YMSM. N-linked (GlcNAc...) asparagine; by host glycosylation occurs at N952. The Internalization motif motif lies at 965-968; the sequence is YTRL. N971 is a glycosylation site (N-linked (GlcNAc...) asparagine; by host).

It belongs to the herpesviridae glycoprotein B family. Homotrimer; disulfide-linked. Binds to heparan sulfate proteoglycans. Interacts with gH/gL heterodimer. A proteolytic cleavage by host furin generates two subunits that remain linked by disulfide bonds.

Its subcellular location is the virion membrane. It localises to the host cell membrane. The protein resides in the host endosome membrane. The protein localises to the host Golgi apparatus membrane. Functionally, envelope glycoprotein that forms spikes at the surface of virion envelope. Essential for the initial attachment to heparan sulfate moieties of the host cell surface proteoglycans. Involved in fusion of viral and cellular membranes leading to virus entry into the host cell. Following initial binding to its host receptors, membrane fusion is mediated by the fusion machinery composed at least of gB and the heterodimer gH/gL. May be involved in the fusion between the virion envelope and the outer nuclear membrane during virion egress. The protein is Envelope glycoprotein B of Equine herpesvirus 1 (strain HVS25A) (EHV-1).